The following is a 416-amino-acid chain: 4-hydroxy-3-methylbut-2-en-1-yl diphosphate synthase (flavodoxin) (416 aa).

Residues Cys-304, Cys-307, Cys-350, and Glu-357 each coordinate [4Fe-4S] cluster.

It belongs to the IspG family. [4Fe-4S] cluster serves as cofactor.

It carries out the reaction (2E)-4-hydroxy-3-methylbut-2-enyl diphosphate + oxidized [flavodoxin] + H2O + 2 H(+) = 2-C-methyl-D-erythritol 2,4-cyclic diphosphate + reduced [flavodoxin]. It functions in the pathway isoprenoid biosynthesis; isopentenyl diphosphate biosynthesis via DXP pathway; isopentenyl diphosphate from 1-deoxy-D-xylulose 5-phosphate: step 5/6. In terms of biological role, converts 2C-methyl-D-erythritol 2,4-cyclodiphosphate (ME-2,4cPP) into 1-hydroxy-2-methyl-2-(E)-butenyl 4-diphosphate. The polypeptide is 4-hydroxy-3-methylbut-2-en-1-yl diphosphate synthase (flavodoxin) (Allorhizobium ampelinum (strain ATCC BAA-846 / DSM 112012 / S4) (Agrobacterium vitis (strain S4))).